A 258-amino-acid chain; its full sequence is uncharacterized protein (258 aa).

The first 19 residues, 1–19 (MRKIFLPLLLVALSPVAHS), serve as a signal peptide directing secretion.

This is an uncharacterized protein from Escherichia coli (strain K12).